An 811-amino-acid polypeptide reads, in one-letter code: Elongation factor G, mitochondrial (811 aa).

Residues 1-64 (MSAIARAAAR…FQQSFQRRWA (64 aa)) constitute a mitochondrion transit peptide. A tr-type G domain is found at 96-394 (RRQRNVGISA…GVCAYLPNPS (299 aa)). GTP is bound by residues 105 to 112 (AHIDSGKT), 192 to 196 (DTPGH), and 246 to 249 (NKMD).

Belongs to the TRAFAC class translation factor GTPase superfamily. Classic translation factor GTPase family. EF-G/EF-2 subfamily.

It localises to the mitochondrion. Its pathway is protein biosynthesis; polypeptide chain elongation. Its function is as follows. Mitochondrial GTPase that catalyzes the GTP-dependent ribosomal translocation step during translation elongation. During this step, the ribosome changes from the pre-translocational (PRE) to the post-translocational (POST) state as the newly formed A-site-bound peptidyl-tRNA and P-site-bound deacylated tRNA move to the P and E sites, respectively. Catalyzes the coordinated movement of the two tRNA molecules, the mRNA and conformational changes in the ribosome. This is Elongation factor G, mitochondrial from Cryptococcus neoformans var. neoformans serotype D (strain B-3501A) (Filobasidiella neoformans).